The chain runs to 251 residues: Haloacid dehalogenase-like hydrolase domain-containing protein 3 (251 aa).

Lysine 15 bears the N6-acetyllysine; alternate mark. An N6-succinyllysine; alternate modification is found at lysine 15. The residue at position 130 (lysine 130) is an N6-acetyllysine.

This sequence belongs to the HAD-like hydrolase superfamily.

The protein is Haloacid dehalogenase-like hydrolase domain-containing protein 3 (Hdhd3) of Mus musculus (Mouse).